The sequence spans 307 residues: tRNA dimethylallyltransferase (307 aa).

6–13 is a binding site for ATP; that stretch reads GATATGKT. Residue 8-13 participates in substrate binding; the sequence is TATGKT. Residues 31 to 34 are interaction with substrate tRNA; sequence DSMM.

This sequence belongs to the IPP transferase family. In terms of assembly, monomer. The cofactor is Mg(2+).

It catalyses the reaction adenosine(37) in tRNA + dimethylallyl diphosphate = N(6)-dimethylallyladenosine(37) in tRNA + diphosphate. Its function is as follows. Catalyzes the transfer of a dimethylallyl group onto the adenine at position 37 in tRNAs that read codons beginning with uridine, leading to the formation of N6-(dimethylallyl)adenosine (i(6)A). This chain is tRNA dimethylallyltransferase, found in Sulfurihydrogenibium sp. (strain YO3AOP1).